The following is a 102-amino-acid chain: Glutaredoxin-C14 (102 aa).

Residues 1–101 (MDKVMRMSSE…PLIKPYQSFH (101 aa)) enclose the Glutaredoxin domain. The cysteines at positions 21 and 24 are disulfide-linked.

The protein belongs to the glutaredoxin family. CC-type subfamily.

It is found in the cytoplasm. In terms of biological role, has a glutathione-disulfide oxidoreductase activity in the presence of NADPH and glutathione reductase. Reduces low molecular weight disulfides and proteins. The chain is Glutaredoxin-C14 (GRXC14) from Arabidopsis thaliana (Mouse-ear cress).